A 147-amino-acid polypeptide reads, in one-letter code: uncharacterized protein (147 aa).

An HTH LytTR-type domain is found at 44–147 (LVGYIDKEIH…LKSIKERLSI (104 aa)).

The protein localises to the cytoplasm. This is an uncharacterized protein from Staphylococcus aureus (strain MRSA252).